The chain runs to 195 residues: Segregation and condensation protein B (195 aa).

This sequence belongs to the ScpB family. As to quaternary structure, homodimer. Homodimerization may be required to stabilize the binding of ScpA to the Smc head domains. Component of a cohesin-like complex composed of ScpA, ScpB and the Smc homodimer, in which ScpA and ScpB bind to the head domain of Smc. The presence of the three proteins is required for the association of the complex with DNA.

Its subcellular location is the cytoplasm. Its function is as follows. Participates in chromosomal partition during cell division. May act via the formation of a condensin-like complex containing Smc and ScpA that pull DNA away from mid-cell into both cell halves. The protein is Segregation and condensation protein B of Clostridium perfringens (strain ATCC 13124 / DSM 756 / JCM 1290 / NCIMB 6125 / NCTC 8237 / Type A).